Consider the following 298-residue polypeptide: Bifunctional protein FolD (298 aa).

NADP(+)-binding positions include G166–S168, S191, and I232.

Belongs to the tetrahydrofolate dehydrogenase/cyclohydrolase family. In terms of assembly, homodimer.

It catalyses the reaction (6R)-5,10-methylene-5,6,7,8-tetrahydrofolate + NADP(+) = (6R)-5,10-methenyltetrahydrofolate + NADPH. The enzyme catalyses (6R)-5,10-methenyltetrahydrofolate + H2O = (6R)-10-formyltetrahydrofolate + H(+). It functions in the pathway one-carbon metabolism; tetrahydrofolate interconversion. Catalyzes the oxidation of 5,10-methylenetetrahydrofolate to 5,10-methenyltetrahydrofolate and then the hydrolysis of 5,10-methenyltetrahydrofolate to 10-formyltetrahydrofolate. The sequence is that of Bifunctional protein FolD from Maricaulis maris (strain MCS10) (Caulobacter maris).